The primary structure comprises 502 residues: DnaJ homolog subfamily C member 3 homolog (502 aa).

A signal peptide spans 1-25 (MIVNKKYFLLICIIILISINCLVLA). TPR repeat units lie at residues 29-62 (IENFLKEGDDLVSKGKYDLANENYSNAIDLIGSD), 69-102 (VSLLFKRAGIYHQKGKNILALSDLNRAIEANPDN), 103-136 (IHARLKRAKIQSSLGRFEEAMDEYKRVLKIRPDN), 184-217 (KEVRLMLCECFFQQGDHRKVLDETMTILKSEPSS), 218-251 (VAALYWRGKTFFSMGEKEIAMKFLKEGLKFDPDN), 264-297 (FEKSTANAQELFNQQKYQDALGQIEDALEIEPNS), 302-335 (TPLYLLKCKCLLKVKKGKESIEACNRALELDELN), and 336-369 (ADALYNRAEAYMYEEDYQKALNDYNKAREHKPND). A glycan (N-linked (GlcNAc...) asparagine) is linked at Asn-51. Cys-309 and Cys-325 are joined by a disulfide. The region spanning 390 to 457 (DYYKILGIQK…EKRKRYDMGE (68 aa)) is the J domain.

The protein resides in the secreted. It is found in the endoplasmic reticulum lumen. Its function is as follows. May be involved in the unfolded protein response (UPR) during ER stress. The sequence is that of DnaJ homolog subfamily C member 3 homolog (dnajc3) from Dictyostelium discoideum (Social amoeba).